The sequence spans 88 residues: Small ribosomal subunit protein uS15 (88 aa).

The protein belongs to the universal ribosomal protein uS15 family. In terms of assembly, part of the 30S ribosomal subunit. Forms a bridge to the 50S subunit in the 70S ribosome, contacting the 23S rRNA.

In terms of biological role, one of the primary rRNA binding proteins, it binds directly to 16S rRNA where it helps nucleate assembly of the platform of the 30S subunit by binding and bridging several RNA helices of the 16S rRNA. Its function is as follows. Forms an intersubunit bridge (bridge B4) with the 23S rRNA of the 50S subunit in the ribosome. This Polaromonas naphthalenivorans (strain CJ2) protein is Small ribosomal subunit protein uS15.